Reading from the N-terminus, the 192-residue chain is uncharacterized protein (192 aa).

The 132-residue stretch at 29–160 (QRQAAVLIPV…PLDVYRRGNS (132 aa)) folds into the Nudix hydrolase domain. Positions 67–89 (GAVDSTDASLIAAALREAQEEVA) match the Nudix box motif. Mg(2+) is bound by residues Glu-83 and Glu-87.

Belongs to the Nudix hydrolase family. PCD1 subfamily. The cofactor is Mn(2+). It depends on Mg(2+) as a cofactor.

In terms of biological role, probably mediates the hydrolysis of some nucleoside diphosphate derivatives. This is an uncharacterized protein from Salmonella newport (strain SL254).